A 362-amino-acid polypeptide reads, in one-letter code: 3-ketodihydrosphingosine reductase gsl-3 (362 aa).

An NADP(+)-binding site is contributed by leucine 55. Residues glycine 58, serine 60, glycine 62, and arginine 83 each contribute to the NADPH site. Positions 58 to 62 (GASEG) match the GXSXG motif. Residue asparagine 84 coordinates NADP(+). NADPH contacts are provided by arginine 87 and aspartate 113. NADP(+) is bound by residues aspartate 113, arginine 176, tyrosine 216, lysine 220, isoleucine 252, and serine 254. The Proton acceptor role is filled by tyrosine 216. Lysine 220 (lowers pKa of active site Tyr) is an active-site residue. The helical transmembrane segment at 318–338 (NNWVLDTLMGWLIPIIYFFVL) threads the bilayer.

Belongs to the short-chain dehydrogenases/reductases (SDR) family.

Its subcellular location is the endoplasmic reticulum membrane. It carries out the reaction sphinganine + NADP(+) = 3-oxosphinganine + NADPH + H(+). It functions in the pathway lipid metabolism; sphingolipid metabolism. Its function is as follows. Catalyzes the reduction of 3'-oxosphinganine (3-ketodihydrosphingosine/KDS) to sphinganine (dihydrosphingosine/DHS), the second step of de novo sphingolipid biosynthesis. The chain is 3-ketodihydrosphingosine reductase gsl-3 (gsl-3) from Neurospora crassa (strain ATCC 24698 / 74-OR23-1A / CBS 708.71 / DSM 1257 / FGSC 987).